We begin with the raw amino-acid sequence, 74 residues long: RNA-binding protein Hfq (74 aa).

The region spanning 9–69 (DQFLNQLRKD…ISTFAPEKNV (61 aa)) is the Sm domain.

The protein belongs to the Hfq family. As to quaternary structure, homohexamer.

RNA chaperone that binds small regulatory RNA (sRNAs) and mRNAs to facilitate mRNA translational regulation in response to envelope stress, environmental stress and changes in metabolite concentrations. Also binds with high specificity to tRNAs. The chain is RNA-binding protein Hfq from Geobacillus sp. (strain WCH70).